Here is a 275-residue protein sequence, read N- to C-terminus: 3-methyl-2-oxobutanoate hydroxymethyltransferase (275 aa).

Residues Asp49 and Asp88 each coordinate Mg(2+). 3-methyl-2-oxobutanoate-binding positions include 49-50 (DS), Asp88, and Lys118. A Mg(2+)-binding site is contributed by Glu120. The active-site Proton acceptor is Glu187.

The protein belongs to the PanB family. As to quaternary structure, homodecamer; pentamer of dimers. The cofactor is Mg(2+).

It is found in the cytoplasm. It carries out the reaction 3-methyl-2-oxobutanoate + (6R)-5,10-methylene-5,6,7,8-tetrahydrofolate + H2O = 2-dehydropantoate + (6S)-5,6,7,8-tetrahydrofolate. It participates in cofactor biosynthesis; (R)-pantothenate biosynthesis; (R)-pantoate from 3-methyl-2-oxobutanoate: step 1/2. In terms of biological role, catalyzes the reversible reaction in which hydroxymethyl group from 5,10-methylenetetrahydrofolate is transferred onto alpha-ketoisovalerate to form ketopantoate. The sequence is that of 3-methyl-2-oxobutanoate hydroxymethyltransferase from Rhodospirillum centenum (strain ATCC 51521 / SW).